The sequence spans 133 residues: Small ribosomal subunit protein uS11 (133 aa).

Belongs to the universal ribosomal protein uS11 family. Part of the 30S ribosomal subunit. Interacts with proteins S7 and S18. Binds to IF-3.

Located on the platform of the 30S subunit, it bridges several disparate RNA helices of the 16S rRNA. Forms part of the Shine-Dalgarno cleft in the 70S ribosome. The sequence is that of Small ribosomal subunit protein uS11 from Ralstonia nicotianae (strain ATCC BAA-1114 / GMI1000) (Ralstonia solanacearum).